We begin with the raw amino-acid sequence, 376 residues long: Growth/differentiation factor 8 (376 aa).

Positions 1 to 24 are cleaved as a signal peptide; the sequence is MIQKPQMYVYIYLFVLIAAGPVDL. Residues 25–267 constitute a propeptide that is removed on maturation; it reads NEDSEREANV…VTDTPKRSRR (243 aa). Residue asparagine 72 is glycosylated (N-linked (GlcNAc...) asparagine). Disulfide bonds link cysteine 273-cysteine 283, cysteine 282-cysteine 341, cysteine 310-cysteine 373, and cysteine 314-cysteine 375.

This sequence belongs to the TGF-beta family. As to quaternary structure, homodimer; disulfide-linked. Interacts with WFIKKN2, leading to inhibit its activity. Interacts with FSTL3. In terms of processing, synthesized as large precursor molecule that undergoes proteolytic cleavage to generate an N-terminal propeptide and a disulfide linked C-terminal dimer, which is the biologically active molecule. The circulating form consists of a latent complex of the C-terminal dimer and other proteins, including its propeptide, which maintain the C-terminal dimer in a latent, inactive state. Ligand activation requires additional cleavage of the prodomain by a tolloid-like metalloproteinase.

The protein localises to the secreted. Acts specifically as a negative regulator of skeletal muscle growth. This chain is Growth/differentiation factor 8 (Mstn), found in Rattus norvegicus (Rat).